The following is a 333-amino-acid chain: C4-dicarboxylate-binding periplasmic protein DctP (333 aa).

A signal peptide spans 1–26 (MLTRRILGALVGATALSLALSVPALA).

Belongs to the bacterial solute-binding protein 7 family. The complex comprises the extracytoplasmic solute receptor protein DctP, and the two transmembrane proteins DctQ and DctM.

The protein localises to the periplasm. In terms of biological role, part of the tripartite ATP-independent periplasmic (TRAP) transport system DctPQM involved in C4-dicarboxylates uptake. Binds C4-dicarboxylates such as fumarate, succinate, L-malate and D-malate. The polypeptide is C4-dicarboxylate-binding periplasmic protein DctP (Rhodobacter capsulatus (Rhodopseudomonas capsulata)).